The sequence spans 375 residues: Palmitoyltransferase PFA4 (375 aa).

The Cytoplasmic portion of the chain corresponds to 1-9; it reads MAVLVKWPW. A helical membrane pass occupies residues 10–30; that stretch reads LGVAIPCFLISFTGYFAHFFV. The Lumenal portion of the chain corresponds to 31–33; the sequence is LTN. The helical transmembrane segment at 34-54 threads the bilayer; it reads FLSFKELLWFQVSLSMIWISY. The Cytoplasmic segment spans residues 55–121; the sequence is WKAIYKNPGR…MNCVGYKNFP (67 aa). A DHHC domain is found at 78–128; it reads NYCTKCETYKPERTHHCKRCNQCVLVMDHHCPWTMNCVGYKNFPHFIRFLF. Catalysis depends on C108, which acts as the S-palmitoyl cysteine intermediate. A helical membrane pass occupies residues 122–142; that stretch reads HFIRFLFWIIATTGILLHYFV. Over 143 to 164 the chain is Lumenal; sequence KRIKFTWVNRYATANLVSKQEL. A helical transmembrane segment spans residues 165–185; sequence IFLTILTPLDAFILLTISLLF. At 186 to 375 the chain is on the cytoplasmic side; it reads VRCVKNQIVN…EHFGVDVEVE (190 aa).

Belongs to the DHHC palmitoyltransferase family. PFA4 subfamily.

The protein localises to the endoplasmic reticulum membrane. It carries out the reaction L-cysteinyl-[protein] + hexadecanoyl-CoA = S-hexadecanoyl-L-cysteinyl-[protein] + CoA. In terms of biological role, mediates the reversible addition of palmitate to target proteins, thereby regulating their membrane association and biological function. The protein is Palmitoyltransferase PFA4 of Eremothecium gossypii (strain ATCC 10895 / CBS 109.51 / FGSC 9923 / NRRL Y-1056) (Yeast).